The sequence spans 561 residues: Putative transport protein YbjL (561 aa).

5 consecutive transmembrane segments (helical) span residues 8–28 (LLNG…LCLG), 32–52 (LGSV…LLGQ), 66–86 (FMLF…SIFF), 94–114 (MLAL…GKLF), and 158–178 (NLSL…IVGA). 2 RCK C-terminal domains span residues 200-288 (RGLD…SFRN) and 292-373 (VFDR…RIGF). A run of 5 helical transmembrane segments spans residues 383–403 (LLAF…TFQF), 406–426 (FSFG…LGFL), 447–467 (FGLM…INNG), 475–495 (MLIA…LFGA), and 540–560 (AIAN…WPGL).

It belongs to the AAE transporter (TC 2.A.81) family. YbjL subfamily.

The protein resides in the cell membrane. This Salmonella paratyphi C (strain RKS4594) protein is Putative transport protein YbjL.